Here is a 138-residue protein sequence, read N- to C-terminus: FUN14 domain-containing protein fndc-1 (138 aa).

2 consecutive transmembrane segments (helical) span residues 37–56 (PMVQLGVGAGFGTVTGYFVT) and 61–78 (LVAATVGISFLLAQFAIH). Residues Asn85 and Asn111 are each glycosylated (N-linked (GlcNAc...) asparagine).

Belongs to the FUN14 family. In terms of tissue distribution, broadly expressed in somatic tissues. Expressed in the hermaphrodite spermatheca and male gonad. Expressed in spermatids, but not expressed in oocytes.

The protein localises to the mitochondrion outer membrane. In terms of biological role, mitophagy receptor which plays a role in paternal mitochondria degradation in embryos after the two-cell stage. This is FUN14 domain-containing protein fndc-1 from Caenorhabditis elegans.